Here is a 323-residue protein sequence, read N- to C-terminus: Fructokinase-1 (323 aa).

This sequence belongs to the carbohydrate kinase PfkB family. As to expression, expressed in stems, at higher levels in roots, and hardly detectable in leaves.

It catalyses the reaction D-fructose + ATP = D-fructose 6-phosphate + ADP + H(+). Its pathway is glycan biosynthesis; starch biosynthesis. With respect to regulation, inhibited at high fructose. Its function is as follows. May play an important role in maintaining the flux of carbon towards starch formation in endosperm. May also be involved in a sugar-sensing pathway. The polypeptide is Fructokinase-1 (FRK1) (Zea mays (Maize)).